The following is a 304-amino-acid chain: 2-oxoacid:ferredoxin oxidoreductase 2, subunit beta (304 aa).

[4Fe-4S] cluster contacts are provided by C12, C15, and C46. Thiamine diphosphate-binding positions include 44–47 (IGCS) and H65. A Mg(2+)-binding site is contributed by D90. 91–92 (GD) is a binding site for thiamine diphosphate. 2 residues coordinate Mg(2+): N118 and V120. Position 122–123 (122–123 (GL)) interacts with thiamine diphosphate. C197 contacts [4Fe-4S] cluster.

In terms of assembly, heterodimer composed of an alpha and a beta subunit. It depends on [4Fe-4S] cluster as a cofactor. Requires thiamine diphosphate as cofactor. Mg(2+) is required as a cofactor.

It carries out the reaction a 2-oxocarboxylate + 2 oxidized [2Fe-2S]-[ferredoxin] + CoA = an acyl-CoA + 2 reduced [2Fe-2S]-[ferredoxin] + CO2 + H(+). Its function is as follows. Catalyzes the coenzyme A-dependent oxidative decarboxylation of different 2-oxoacids such as 2-oxoglutarate, pyruvate and 2-oxobutyrate to form their CoA derivatives. In Sulfurisphaera tokodaii (strain DSM 16993 / JCM 10545 / NBRC 100140 / 7) (Sulfolobus tokodaii), this protein is 2-oxoacid:ferredoxin oxidoreductase 2, subunit beta.